Consider the following 510-residue polypeptide: GMP synthase [glutamine-hydrolyzing] (510 aa).

The region spanning 5-195 is the Glutamine amidotransferase type-1 domain; the sequence is LVLVVDFGGQ…LFNVCNLKGD (191 aa). C82 acts as the Nucleophile in catalysis. Active-site residues include H169 and E171. The region spanning 196–385 is the GMPS ATP-PPase domain; it reads WSMSSFAEQQ…LGIPHKLVWR (190 aa). ATP is bound at residue 223-229; the sequence is SGGVDSS.

As to quaternary structure, homodimer.

It catalyses the reaction XMP + L-glutamine + ATP + H2O = GMP + L-glutamate + AMP + diphosphate + 2 H(+). Its pathway is purine metabolism; GMP biosynthesis; GMP from XMP (L-Gln route): step 1/1. In terms of biological role, catalyzes the synthesis of GMP from XMP. This is GMP synthase [glutamine-hydrolyzing] from Clostridium botulinum (strain Okra / Type B1).